We begin with the raw amino-acid sequence, 1202 residues long: DNA-directed RNA polymerase subunit beta (1202 aa).

Acidic residues predominate over residues 1151–1162 (LRDMDEEDDDVV). Residues 1151–1202 (LRDMDEEDDDVVNVDALSKYAEKQNEKTNASAEEAKAPSTESAPVETKNNQN) form a disordered region. A compositionally biased stretch (polar residues) spans 1189–1202 (STESAPVETKNNQN).

This sequence belongs to the RNA polymerase beta chain family. The RNAP catalytic core consists of 2 alpha, 1 beta, 1 beta' and 1 omega subunit. When a sigma factor is associated with the core the holoenzyme is formed, which can initiate transcription.

The enzyme catalyses RNA(n) + a ribonucleoside 5'-triphosphate = RNA(n+1) + diphosphate. In terms of biological role, DNA-dependent RNA polymerase catalyzes the transcription of DNA into RNA using the four ribonucleoside triphosphates as substrates. In Pediococcus pentosaceus (strain ATCC 25745 / CCUG 21536 / LMG 10740 / 183-1w), this protein is DNA-directed RNA polymerase subunit beta.